Reading from the N-terminus, the 133-residue chain is Ribonuclease P protein component (133 aa).

It belongs to the RnpA family. Consists of a catalytic RNA component (M1 or rnpB) and a protein subunit.

The enzyme catalyses Endonucleolytic cleavage of RNA, removing 5'-extranucleotides from tRNA precursor.. Its function is as follows. RNaseP catalyzes the removal of the 5'-leader sequence from pre-tRNA to produce the mature 5'-terminus. It can also cleave other RNA substrates such as 4.5S RNA. The protein component plays an auxiliary but essential role in vivo by binding to the 5'-leader sequence and broadening the substrate specificity of the ribozyme. This Pseudomonas entomophila (strain L48) protein is Ribonuclease P protein component.